The chain runs to 184 residues: ATP synthase subunit b, chloroplastic (184 aa).

A helical membrane pass occupies residues 27–49 (LATNPINLSVVLGVLIFFGKGVL).

The protein belongs to the ATPase B chain family. As to quaternary structure, F-type ATPases have 2 components, F(1) - the catalytic core - and F(0) - the membrane proton channel. F(1) has five subunits: alpha(3), beta(3), gamma(1), delta(1), epsilon(1). F(0) has four main subunits: a(1), b(1), b'(1) and c(10-14). The alpha and beta chains form an alternating ring which encloses part of the gamma chain. F(1) is attached to F(0) by a central stalk formed by the gamma and epsilon chains, while a peripheral stalk is formed by the delta, b and b' chains.

It is found in the plastid. The protein resides in the chloroplast thylakoid membrane. In terms of biological role, f(1)F(0) ATP synthase produces ATP from ADP in the presence of a proton or sodium gradient. F-type ATPases consist of two structural domains, F(1) containing the extramembraneous catalytic core and F(0) containing the membrane proton channel, linked together by a central stalk and a peripheral stalk. During catalysis, ATP synthesis in the catalytic domain of F(1) is coupled via a rotary mechanism of the central stalk subunits to proton translocation. Functionally, component of the F(0) channel, it forms part of the peripheral stalk, linking F(1) to F(0). The protein is ATP synthase subunit b, chloroplastic of Pelargonium hortorum (Common geranium).